A 220-amino-acid polypeptide reads, in one-letter code: UPF0319 protein YccT (220 aa).

The signal sequence occupies residues 1–20 (MKTGALATFLALCLPVTVFA).

The protein belongs to the UPF0319 family.

The protein is UPF0319 protein YccT of Salmonella paratyphi A (strain ATCC 9150 / SARB42).